The chain runs to 384 residues: 8-amino-7-oxononanoate synthase (384 aa).

Arg21 contacts substrate. Position 108–109 (108–109 (GF)) interacts with pyridoxal 5'-phosphate. His133 is a substrate binding site. 3 residues coordinate pyridoxal 5'-phosphate: Ser179, His207, and Thr233. Residue Lys236 is modified to N6-(pyridoxal phosphate)lysine. Position 352 (Thr352) interacts with substrate.

It belongs to the class-II pyridoxal-phosphate-dependent aminotransferase family. BioF subfamily. As to quaternary structure, homodimer. Requires pyridoxal 5'-phosphate as cofactor.

The catalysed reaction is 6-carboxyhexanoyl-[ACP] + L-alanine + H(+) = (8S)-8-amino-7-oxononanoate + holo-[ACP] + CO2. The protein operates within cofactor biosynthesis; biotin biosynthesis. In terms of biological role, catalyzes the decarboxylative condensation of pimeloyl-[acyl-carrier protein] and L-alanine to produce 8-amino-7-oxononanoate (AON), [acyl-carrier protein], and carbon dioxide. This Escherichia coli O157:H7 protein is 8-amino-7-oxononanoate synthase.